We begin with the raw amino-acid sequence, 444 residues long: tRNA-2-methylthio-N(6)-dimethylallyladenosine synthase (444 aa).

The MTTase N-terminal domain occupies 2 to 119 (KKVYIKTFGC…LPDLIESRKQ (118 aa)). [4Fe-4S] cluster contacts are provided by C11, C48, C82, C156, C160, and C163. Residues 142 to 374 (KVDGGAAFVS…NEVIEAKGYA (233 aa)) form the Radical SAM core domain. One can recognise a TRAM domain in the interval 377-440 (QSMVGTVQRV…PHSLAGEALT (64 aa)).

It belongs to the methylthiotransferase family. MiaB subfamily. Monomer. Requires [4Fe-4S] cluster as cofactor.

Its subcellular location is the cytoplasm. The catalysed reaction is N(6)-dimethylallyladenosine(37) in tRNA + (sulfur carrier)-SH + AH2 + 2 S-adenosyl-L-methionine = 2-methylsulfanyl-N(6)-dimethylallyladenosine(37) in tRNA + (sulfur carrier)-H + 5'-deoxyadenosine + L-methionine + A + S-adenosyl-L-homocysteine + 2 H(+). Functionally, catalyzes the methylthiolation of N6-(dimethylallyl)adenosine (i(6)A), leading to the formation of 2-methylthio-N6-(dimethylallyl)adenosine (ms(2)i(6)A) at position 37 in tRNAs that read codons beginning with uridine. This is tRNA-2-methylthio-N(6)-dimethylallyladenosine synthase from Chromobacterium violaceum (strain ATCC 12472 / DSM 30191 / JCM 1249 / CCUG 213 / NBRC 12614 / NCIMB 9131 / NCTC 9757 / MK).